Consider the following 538-residue polypeptide: Retinoblastoma-binding protein 5 (538 aa).

WD repeat units lie at residues 22–63 (DCIS…KIIS) and 64–103 (AHIH…CDQR). Lys129 is covalently cross-linked (Glycyl lysine isopeptide (Lys-Gly) (interchain with G-Cter in SUMO2)). 4 WD repeats span residues 148–188 (DDDS…LVAS), 196–235 (SNTT…TCGR), 249–291 (VNRT…KILH), and 293–331 (TRGE…NWSA). Thr252 carries the post-translational modification Phosphothreonine; by CDK1. Residues 330-366 (SAFAPDFKELDENVEYEERESEFDIEDEDKSEPEQTG) form an interaction with ASH2L region. The segment covering 344–360 (EYEERESEFDIEDEDKS) has biased composition (acidic residues). Residues 344 to 377 (EYEERESEFDIEDEDKSEPEQTGADAAEDEEVDV) are disordered. At Ser350 the chain carries Phosphoserine. An interaction with WDR5 region spans residues 371 to 380 (EDEEVDVTSV). Phosphoserine is present on residues Ser388 and Ser389. The disordered stretch occupies residues 408 to 538 (VEDPEENPYG…TAGGAISELL (131 aa)). The segment covering 479–490 (SKKKQAGRPKGS) has biased composition (basic residues). Residues 491–510 (KGKEKDSPFKPKLYKGDRGL) show a composition bias toward basic and acidic residues. Ser497 carries the phosphoserine; by CDK1 modification. Position 525 is a phosphoserine (Ser525).

Component of the SET1 complex, at least composed of the catalytic subunit (SETD1A or SETD1B), WDR5, WDR82, RBBP5, ASH2L/ASH2, CXXC1/CFP1, HCFC1 and DPY30. Core component of several methyltransferase-containing complexes including MLL1/MLL, MLL2/3 (also named ASCOM complex) and MLL4/WBP7. Each complex is at least composed of ASH2L, RBBP5, WDR5, DPY30, one or more specific histone methyltransferases (KMT2A/MLL1, KMT2D/MLL2, KMT2C/MLL3 and KMT2B/MLL4), and the facultative components PAGR1, BACC1, CHD8, E2F6, HCFC1, HCFC2, HSP70, INO80C, KDM6A, KANSL1, LAS1L, MAX, MCRS1, MEN1, MGA, MYST1/MOF, NCOA6, PAXIP1/PTIP, PELP1, PHF20, PRP31, RING2, RUVB1/TIP49A, RUVB2/TIP49B, SENP3, TAF1, TAF4, TAF6, TAF7, TAF9, TEX10 and alpha- and beta-tubulin. Component of a histone methylation complex composed of at least ZNF335, RBBP5, ASH2L and WDR5; the complex may have histone H3-specific methyltransferase activity, however does not have specificity for 'Lys-4' of histone H3. Interacts with ZNF335. Interacts with ASH2L; the interaction is direct. Interacts with WDR5; the interaction is direct. Components of the ZNF335-RBBP5-ASH2L-WDR5 histone methylation complex may associate with components of a nuclear receptor-mediated transcription complex to form a complex at least composed of ZNF335, HCFC1, CCAR2, EMSY, MKI67, RBBP5, ASH2L and WDR5. Within this complex interacts with EMSY. Found in a complex with RBBP5, ASH2L, DPY30, KMT2A, KMT2D and WDR5. Interacts with SETD1A. Interacts with WDR82. As to expression, ubiquitously expressed.

It is found in the nucleus. In embryonic stem (ES) cells, plays a crucial role in the differentiation potential, particularly along the neural lineage, regulating gene induction and H3 'Lys-4' methylation at key developmental loci, including that mediated by retinoic acid. Does not affect ES cell self-renewal. Component or associated component of some histone methyltransferase complexes which regulates transcription through recruitment of those complexes to gene promoters. As part of the MLL1/MLL complex, involved in mono-, di- and trimethylation at 'Lys-4' of histone H3. Histone H3 'Lys-4' methylation represents a specific tag for epigenetic transcriptional activation. In association with ASH2L and WDR5, stimulates the histone methyltransferase activities of KMT2A, KMT2B, KMT2C, KMT2D, SETD1A and SETD1B. The sequence is that of Retinoblastoma-binding protein 5 (RBBP5) from Homo sapiens (Human).